Reading from the N-terminus, the 635-residue chain is Bifunctional lysine-specific demethylase and histidyl-hydroxylase NO66 (635 aa).

Disordered stretches follow at residues 1–115 (MSAV…LQNS) and 141–190 (FNGE…KANG). Residues 84 to 99 (ASASDINTSASKNVNA) are compositionally biased toward low complexity. Residues 141–156 (FNGESLKNNSNHSTPV) show a composition bias toward polar residues. In terms of domain architecture, JmjC spans 295-440 (CSIRMLNPQT…DLLELFFPHA (146 aa)). Residues histidine 341, aspartate 343, and histidine 406 each contribute to the Fe cation site.

This sequence belongs to the ROX family. NO66 subfamily. Fe(2+) is required as a cofactor.

The protein localises to the nucleus. It carries out the reaction N(6),N(6)-dimethyl-L-lysyl(36)-[histone H3] + 2 2-oxoglutarate + 2 O2 = L-lysyl(36)-[histone H3] + 2 formaldehyde + 2 succinate + 2 CO2. Oxygenase that can act as both a histone lysine demethylase and a ribosomal histidine hydroxylase. Specifically demethylates 'Lys-4' (H3K4me) and 'Lys-36' (H3K36me) of histone H3, thereby playing a central role in histone code. This Aedes aegypti (Yellowfever mosquito) protein is Bifunctional lysine-specific demethylase and histidyl-hydroxylase NO66.